The sequence spans 395 residues: Endophilin-B2 (395 aa).

An N-acetylmethionine modification is found at M1. The tract at residues 1 to 27 (MDFNMKKLASDAGIFFTRAVQFTEEKF) is membrane-binding amphipathic helix. At S10 the chain carries Phosphoserine. A BAR domain is found at 24–287 (EEKFGQAEKT…LGRFPGTFVG (264 aa)). 2 coiled-coil regions span residues 116–132 (IKVA…ERDF) and 206–240 (ASAL…LLLE). The SH3 domain maps to 335-395 (SGTRKARVLY…VPVTYLELLS (61 aa)). Residue S395 is modified to Phosphoserine.

It belongs to the endophilin family. Homodimer, and heterodimer with SH3GLB1. As to expression, detected in skeletal muscle, adipocyte, brain, lung, colon and mammary gland.

It localises to the cytoplasm. The protein is Endophilin-B2 (SH3GLB2) of Homo sapiens (Human).